Consider the following 335-residue polypeptide: Flagellar P-ring protein (335 aa).

Positions methionine 1–alanine 24 are cleaved as a signal peptide.

It belongs to the FlgI family. The basal body constitutes a major portion of the flagellar organelle and consists of four rings (L,P,S, and M) mounted on a central rod.

The protein localises to the periplasm. The protein resides in the bacterial flagellum basal body. Assembles around the rod to form the L-ring and probably protects the motor/basal body from shearing forces during rotation. The sequence is that of Flagellar P-ring protein from Bdellovibrio bacteriovorus (strain ATCC 15356 / DSM 50701 / NCIMB 9529 / HD100).